The sequence spans 123 residues: Protein Wnt-7a (123 aa).

A lipid anchor (O-palmitoleoyl serine; by PORCN) is attached at Ser1. The disordered linker stretch occupies residues 33–61 (VEPVRASRNKRPTFLKIKKPLSYLKPMDT). Cys89 and Cys104 are joined by a disulfide. Residue Asn90 is glycosylated (N-linked (GlcNAc...) asparagine).

This sequence belongs to the Wnt family. In terms of processing, palmitoleoylation is required for efficient binding to frizzled receptors. Depalmitoleoylation leads to Wnt signaling pathway inhibition.

It is found in the secreted. Its subcellular location is the extracellular space. The protein localises to the extracellular matrix. Its function is as follows. Ligand for members of the frizzled family of seven transmembrane receptors that functions in the canonical Wnt/beta-catenin signaling pathway. Plays an important role in embryonic development, including dorsal versus ventral patterning during limb development, skeleton development and urogenital tract development. Required for central nervous system (CNS) angiogenesis and blood-brain barrier regulation. This Plethodon jordani (Red-cheeked salamander) protein is Protein Wnt-7a (WNT-7A).